A 288-amino-acid chain; its full sequence is Phospholipid phosphatase 2 (288 aa).

Residues 1–4 (MQRR) are Cytoplasmic-facing. Residues 5–25 (WVFVLLDVLCLLVASLPFAIL) traverse the membrane as a helical segment. The Lumenal portion of the chain corresponds to 26 to 51 (TLVNAPYKRGFYCGDDSIRYPYRPDT). A helical transmembrane segment spans residues 52–72 (ITHGLMAGVTITATVILVSAG). The Cytoplasmic portion of the chain corresponds to 73–87 (EAYLVYTDRLYSRSD). A helical transmembrane segment spans residues 88–108 (FNNYVAAVYKVLGTFLFGAAV). Residues 109–162 (SQSLTDLAKYMIGRLRPNFLAVCDPDWSRVNCSVYVQLEKVCRGNPADVTEARL) lie on the Lumenal side of the membrane. The segment at 117–125 (KYMIGRLRP) is phosphatase sequence motif I. The N-linked (GlcNAc...) asparagine glycan is linked to asparagine 139. Residues 163-183 (SFYSGHSSFGMYCMVFLALYV) form a helical membrane-spanning segment. Residues 165–168 (YSGH) form a phosphatase sequence motif II region. The active-site Proton donors is histidine 168. At 184 to 196 (QARLCWKWARLLR) the chain is on the cytoplasmic side. A helical transmembrane segment spans residues 197–217 (PTVQFFLVAFALYVGYTRVSD). A phosphatase sequence motif III region spans residues 213-224 (TRVSDYKHHWSD). At 218 to 226 (YKHHWSDVL) the chain is on the lumenal side. Histidine 220 acts as the Nucleophile in catalysis. A helical transmembrane segment spans residues 227–247 (VGLLQGALVAALTVCYISDFF). At 248 to 288 (KARPPQHCLKEEELERKPSLSLTLTLGEADHNHYGYPHSSS) the chain is on the cytoplasmic side.

It belongs to the PA-phosphatase related phosphoesterase family. As to quaternary structure, forms functional homodimers and homooligomers. Can also form heterooligomers with PLPP1 and PLPP3. In terms of processing, N-glycosylated. Found mainly in brain, pancreas and placenta.

It localises to the membrane. Its subcellular location is the cell membrane. It is found in the early endosome membrane. The protein localises to the endoplasmic reticulum membrane. It catalyses the reaction a 1,2-diacyl-sn-glycero-3-phosphate + H2O = a 1,2-diacyl-sn-glycerol + phosphate. It carries out the reaction 1,2-dihexadecanoyl-sn-glycero-3-phosphate + H2O = 1,2-dihexadecanoyl-sn-glycerol + phosphate. The enzyme catalyses 1,2-di-(9Z-octadecenoyl)-sn-glycero-3-phosphate + H2O = 1,2-di-(9Z-octadecenoyl)-sn-glycerol + phosphate. The catalysed reaction is a monoacyl-sn-glycero-3-phosphate + H2O = a monoacylglycerol + phosphate. It catalyses the reaction (9Z)-octadecenoyl-sn-glycero-3-phosphate + H2O = (9Z-octadecenoyl)-glycerol + phosphate. It carries out the reaction sphing-4-enine 1-phosphate + H2O = sphing-4-enine + phosphate. The enzyme catalyses an N-acylsphing-4-enine 1-phosphate + H2O = an N-acylsphing-4-enine + phosphate. The catalysed reaction is N-(octanoyl)-sphing-4-enine-1-phosphate + H2O = N-octanoylsphing-4-enine + phosphate. It catalyses the reaction N-(9Z-octadecenoyl)-ethanolamine phosphate + H2O = N-(9Z-octadecenoyl) ethanolamine + phosphate. Its pathway is lipid metabolism; phospholipid metabolism. Magnesium-independent phospholipid phosphatase. Insensitive to N-ethylmaleimide. Inhibited by sphingosine, zinc ions and modestly by propanolol. Magnesium-independent phospholipid phosphatase that catalyzes the dephosphorylation of a variety of glycerolipid and sphingolipid phosphate esters including phosphatidate/PA, lysophosphatidate/LPA, sphingosine 1-phosphate/S1P and ceramide 1-phosphate/C1P. Has no apparent extracellular phosphatase activity and therefore most probably acts intracellularly. Also acts on N-oleoyl ethanolamine phosphate/N-(9Z-octadecenoyl)-ethanolamine phosphate, a potential physiological compound. Through dephosphorylation of these bioactive lipid mediators produces new bioactive compounds and may regulate signal transduction in different cellular processes. Indirectly regulates, for instance, cell cycle G1/S phase transition through its phospholipid phosphatase activity. The protein is Phospholipid phosphatase 2 of Homo sapiens (Human).